A 137-amino-acid chain; its full sequence is Small ribosomal subunit protein uS11 (137 aa).

Disordered stretches follow at residues 1–31 (MPPKSRGTGPKKTQKARRRDKKNVPHGAAHI) and 117–137 (TISDVTPQPHNGCRPPKRRRV). Residues 12–21 (KTQKARRRDK) show a composition bias toward basic residues.

The protein belongs to the universal ribosomal protein uS11 family. In terms of assembly, part of the 30S ribosomal subunit. Interacts with proteins S7 and S18. Binds to IF-3.

In terms of biological role, located on the platform of the 30S subunit, it bridges several disparate RNA helices of the 16S rRNA. Forms part of the Shine-Dalgarno cleft in the 70S ribosome. The chain is Small ribosomal subunit protein uS11 from Rhodococcus jostii (strain RHA1).